A 433-amino-acid chain; its full sequence is Probable dipeptidase (433 aa).

C20 is an active-site residue.

The protein belongs to the peptidase C69 family.

The catalysed reaction is an L-aminoacyl-L-amino acid + H2O = 2 an L-alpha-amino acid. The protein is Probable dipeptidase (pipD) of Salmonella dublin.